Reading from the N-terminus, the 223-residue chain is Putative NAD(P)H nitroreductase SAB2397c (223 aa).

Belongs to the nitroreductase family. It depends on FMN as a cofactor.

This chain is Putative NAD(P)H nitroreductase SAB2397c, found in Staphylococcus aureus (strain bovine RF122 / ET3-1).